A 663-amino-acid polypeptide reads, in one-letter code: Polyunsaturated fatty acid lipoxygenase ALOX15 (663 aa).

Positions 2–115 (GVYRIRVSTG…ILNLPEGTGC (114 aa)) constitute a PLAT domain. Positions 116-663 (TVVEDSQGLF…PSLVENSVAI (548 aa)) constitute a Lipoxygenase domain. Residues H361, H366, H541, H545, and I663 each coordinate Fe cation.

The protein belongs to the lipoxygenase family. In terms of assembly, interacts with PEBP1; in response to IL13/interleukin-13, prevents the interaction of PEBP1 with RAF1 to activate the ERK signaling cascade. Fe cation is required as a cofactor. In terms of tissue distribution, found in pituitary and pineal glands as well as leukocytes, kidney, aorta, small intestine and cornea. Also expressed by resident peritoneal macrophages (at protein level).

The protein resides in the cytoplasm. It localises to the cytosol. The protein localises to the cell membrane. Its subcellular location is the lipid droplet. It catalyses the reaction (5Z,8Z,11Z,14Z)-eicosatetraenoate + O2 = (12S)-hydroperoxy-(5Z,8Z,10E,14Z)-eicosatetraenoate. It carries out the reaction (5Z,8Z,11Z,14Z)-eicosatetraenoate + O2 = (15S)-hydroperoxy-(5Z,8Z,11Z,13E)-eicosatetraenoate. The catalysed reaction is (9Z,12Z)-octadecadienoate + O2 = (13S)-hydroperoxy-(9Z,11E)-octadecadienoate. The enzyme catalyses (5Z,8Z,11Z,14Z)-eicosatetraenoate + 2 O2 = (14R,15S)-dihydroperoxy-(5Z,8Z,10E,12E)-eicosatetraenoate. It catalyses the reaction (5Z,8Z,11Z,14Z)-eicosatetraenoate + 2 O2 = (8S,15S)-dihydroperoxy-(5Z,9E,11Z,13E)-eicosatetraenoate. It carries out the reaction (14S,15R)-epoxy-(5Z,8Z,11Z)-eicosatrienoate + O2 = (8S)-hydroperoxy-(14S,15R)-epoxy-(5Z,9E,11Z)-eicosatrienoate. The catalysed reaction is (14S,15R)-epoxy-(5Z,8Z,11Z)-eicosatrienoate + O2 = (12S)-hydroperoxy-(14S,15R)-epoxy-(5Z,8Z,10E)-eicosatrienoate. The enzyme catalyses (14R,15S)-epoxy-(5Z,8Z,11Z)-eicosatrienoate + O2 = (5S)-hydroperoxy-(14R,15S)-epoxy-(6E,8Z,11Z)-eicosatrienoate. It catalyses the reaction (14R,15S)-epoxy-(5Z,8Z,11Z)-eicosatrienoate + O2 = (12S)-hydroperoxy-(14R,15S)-epoxy-(5Z,8Z,10E)-eicosatrienoate. It carries out the reaction (15R)-hydroperoxy-(5Z,8Z,11Z,13E)-eicosatetraenoate = 15-oxo-(5Z,8Z,11Z,13E)-eicosatetraenoate + H2O. The catalysed reaction is (15S)-hydroperoxy-(5Z,8Z,11Z,13E)-eicosatetraenoate = (14S,15S)-epoxy-(5Z,8Z,10E,12E)-eicosatetraenoate + H2O. The enzyme catalyses (12S)-hydroperoxy-(5Z,8Z,10E,14Z)-eicosatetraenoate = (8S)-hydroxy-(11S,12S)-epoxy-(5Z,9E,14Z)-eicosatrienoate. It catalyses the reaction (4Z,7Z,10Z,13Z,16Z)-docosapentaenoate + O2 = 14-hydroperoxy-(4Z,7Z,10Z,12E,16Z)-docosapentaenoate. It carries out the reaction (7Z,10Z,13Z,16Z,19Z)-docosapentaenoate + O2 = 14-hydroperoxy-(7Z,10Z,12E,16Z,19Z)-docosapentaenoate. The catalysed reaction is (4Z,7Z,10Z,13Z,16Z,19Z)-docosahexaenoate + O2 = (14S)-hydroperoxy-(4Z,7Z,10Z,12E,16Z,19Z)-docosahexaenoate. The enzyme catalyses (4Z,7Z,10Z,13Z,16Z,19Z)-docosahexaenoate + O2 = (17S)-hydroperoxy-(4Z,7Z,10Z,13Z,15E,19Z)-docosahexaenoate. It catalyses the reaction (7S)-hydroperoxy-(4Z,8E,10Z,13Z,16Z,19Z)-docosahexaenoate + O2 = (7S,14S)-dihydroperoxy-(4Z,8E,10Z,12E,16Z,19Z)-docosahexaenoate. It carries out the reaction (7S)-hydroperoxy-(4Z,8E,10Z,13Z,16Z,19Z)-docosahexaenoate + O2 = (7S,17S)-dihydroperoxy-(4Z,8E,10Z,13Z,15E,19Z)-docosahexaenoate. The catalysed reaction is (4Z,7Z,10Z,13Z,16Z,19Z)-docosahexaenoate + O2 = (11S)-hydroperoxy-(4Z,7Z,9E,13Z,16Z,19Z)-docosahexaenoate. The enzyme catalyses N-(5Z,8Z,11Z,14Z)-eicosatetraenoyl-taurine + O2 = N-(12S)-hydroperoxy-(5Z,8Z,10E,14Z)-eicosatetraenoyl-taurine. It catalyses the reaction N-(5Z,8Z,11Z,14Z)-eicosatetraenoyl-gamma-aminobutanoate + O2 = N-(12S)-hydroperoxy-(5Z,8Z,10E,14Z)-eicosatetraenoyl-gamma-aminobutanoate. It carries out the reaction N-(5Z,8Z,11Z,14Z)-eicosatetraenoyl-glycine + O2 = N-(12S)-hydroperoxy-(5Z,8Z,10E,14Z)-eicosatetraenoyl-glycine. The catalysed reaction is N-(5Z,8Z,11Z,14Z)-eicosatetraenoyl-L-alanine + O2 = N-(12S)-hydroperoxy-(5Z,8Z,10E,14Z)-eicosatetraenoyl-alanine. The enzyme catalyses N-(5Z,8Z,11Z,14Z)-eicosatetraenoyl-taurine + O2 = N-(15S)-hydroperoxy-(5Z,8Z,11Z,13E)-eicosatetraenoyl-taurine. It catalyses the reaction N-(5Z,8Z,11Z,14Z)-eicosatetraenoyl-gamma-aminobutanoate + O2 = N-(15S)-hydroperoxy-(5Z,8Z,11Z,13E)-eicosatetraenoyl-gamma-aminobutanoate. It carries out the reaction N-(5Z,8Z,11Z,14Z)-eicosatetraenoyl-glycine + O2 = N-(15S)-hydroperoxy-(5Z,8Z,11Z,13E)-eicosatetraenoyl-glycine. The catalysed reaction is N-(5Z,8Z,11Z,14Z)-eicosatetraenoyl-L-alanine + O2 = N-(15S)-hydroperoxy-(5Z,8Z,11Z,13E)-eicosatetraenoyl-alanine. It functions in the pathway lipid metabolism; hydroperoxy eicosatetraenoic acid biosynthesis. In terms of biological role, non-heme iron-containing dioxygenase that catalyzes the stereo-specific peroxidation of free and esterified polyunsaturated fatty acids generating a spectrum of bioactive lipid mediators. It inserts peroxyl groups at C12 or C15 of arachidonate ((5Z,8Z,11Z,14Z)-eicosatetraenoate) producing both 12-hydroperoxyeicosatetraenoate/12-HPETE and 15-hydroperoxyeicosatetraenoate/15-HPETE. It may then act on 12-HPETE to produce hepoxilins, which may show pro-inflammatory properties. Can also peroxidize linoleate ((9Z,12Z)-octadecadienoate) to 13-hydroperoxyoctadecadienoate. May participate in the sequential oxidations of DHA ((4Z,7Z,10Z,13Z,16Z,19Z)-docosahexaenoate) to generate specialized pro-resolving mediators (SPMs)like resolvin D5 ((7S,17S)-diHPDHA) and (7S,14S)-diHPDHA, that actively down-regulate the immune response and have anti-aggregation properties with platelets. Can convert epoxy fatty acids to hydroperoxy-epoxides derivatives followed by an intramolecular nucleophilic substitution leading to the formation of monocyclic endoperoxides. Plays an important role during the maintenance of self-tolerance by peroxidizing membrane-bound phosphatidylethanolamine which can then signal the sorting process for clearance of apoptotic cells during inflammation and prevent an autoimmune response. In addition to its role in the immune and inflammatory responses, this enzyme may play a role in epithelial wound healing in the cornea through production of lipoxin A4 (LXA(4)) and docosahexaenoic acid-derived neuroprotectin D1 (NPD1; 10R,17S-HDHA), both lipid autacoids exhibit anti-inflammatory and neuroprotective properties. Furthermore, it may regulate actin polymerization which is crucial for several biological processes such as the phagocytosis of apoptotic cells. It is also implicated in the generation of endogenous ligands for peroxisome proliferator activated receptor (PPAR-gamma), hence modulating macrophage development and function. It may also exert a negative effect on skeletal development by regulating bone mass through this pathway. As well as participates in ER stress and downstream inflammation in adipocytes, pancreatic islets, and liver. Finally, it is also involved in the cellular response to IL13/interleukin-13. The polypeptide is Polyunsaturated fatty acid lipoxygenase ALOX15 (Mus musculus (Mouse)).